The primary structure comprises 518 residues: Retinal dehydrogenase 2 (518 aa).

Residue Tyr168 is modified to Phosphotyrosine. NAD(+) contacts are provided by residues 184 to 186 (IPW), 210 to 213 (KPAE), and 264 to 266 (STE). The active-site Proton acceptor is the Glu286. Catalysis depends on Cys320, which acts as the Nucleophile. Ser351 is subject to Phosphoserine. NAD(+) is bound by residues 366–370 (KQYNK) and Glu417.

The protein belongs to the aldehyde dehydrogenase family. Homotetramer. Found in testis and less abundantly in lung, brain, heart, liver and kidney.

The protein localises to the cytoplasm. It carries out the reaction retinal + NAD(+) + H2O = retinoate + NADH + 2 H(+). The enzyme catalyses all-trans-retinal + NAD(+) + H2O = all-trans-retinoate + NADH + 2 H(+). It catalyses the reaction all-trans-13,14-dihydroretinal + NAD(+) + H2O = all-trans-13,14-dihydroretinoate + NADH + 2 H(+). Its pathway is cofactor metabolism; retinol metabolism. Its function is as follows. Catalyzes the NAD-dependent oxidation of aldehyde substrates, such as all-trans-retinal and all-trans-13,14-dihydroretinal, to their corresponding carboxylic acids, all-trans-retinoate and all-trans-13,14-dihydroretinoate, respectively. Retinoate signaling is critical for the transcriptional control of many genes, for instance it is crucial for initiation of meiosis in both male and female. Recognizes retinal as substrate, both in its free form and when bound to cellular retinol-binding protein. Lacks activity with benzaldehyde, acetaldehyde and octanal. Displays complete lack of activity with citral. The chain is Retinal dehydrogenase 2 (Aldh1a2) from Rattus norvegicus (Rat).